A 233-amino-acid chain; its full sequence is Ribose-5-phosphate isomerase A (233 aa).

Substrate is bound by residues 31 to 34 (SGST), 87 to 90 (DGAD), and 100 to 103 (KGGG). The active-site Proton acceptor is the glutamate 109. Lysine 127 contributes to the substrate binding site.

Belongs to the ribose 5-phosphate isomerase family. Homodimer.

It carries out the reaction aldehydo-D-ribose 5-phosphate = D-ribulose 5-phosphate. It participates in carbohydrate degradation; pentose phosphate pathway; D-ribose 5-phosphate from D-ribulose 5-phosphate (non-oxidative stage): step 1/1. Its function is as follows. Catalyzes the reversible conversion of ribose-5-phosphate to ribulose 5-phosphate. The sequence is that of Ribose-5-phosphate isomerase A from Chlamydia caviae (strain ATCC VR-813 / DSM 19441 / 03DC25 / GPIC) (Chlamydophila caviae).